The primary structure comprises 153 residues: Pheromone-binding protein Gp-9 (153 aa).

A signal peptide spans 1 to 19; the sequence is MKTFVLHIFIFAFVAFASA. 3 disulfide bridges follow: C37–C77, C73–C129, and C118–C138.

Belongs to the PBP/GOBP family. As to quaternary structure, homodimer.

Its subcellular location is the secreted. Its function is as follows. Colony queen number, a major feature of social organization, is associated with worker genotype for Gp-9. Colonies are headed by either a single reproductive queen (monogyne form) or multiple queens (polygyne form). Differences in worker Gp-9 genotypes between social forms may cause differences in workers' abilities to recognize queens and regulate their numbers. The protein is Pheromone-binding protein Gp-9 of Solenopsis geminata (Tropical fire ant).